Reading from the N-terminus, the 352-residue chain is Biotin synthase (352 aa).

The Radical SAM core domain occupies 44-262; that stretch reads NRVQVSTLLS…LAVARIMMPK (219 aa). 3 residues coordinate [4Fe-4S] cluster: Cys59, Cys63, and Cys66. Residues Cys103, Cys134, Cys194, and Arg266 each coordinate [2Fe-2S] cluster.

Belongs to the radical SAM superfamily. Biotin synthase family. As to quaternary structure, homodimer. It depends on [4Fe-4S] cluster as a cofactor. Requires [2Fe-2S] cluster as cofactor.

It catalyses the reaction (4R,5S)-dethiobiotin + (sulfur carrier)-SH + 2 reduced [2Fe-2S]-[ferredoxin] + 2 S-adenosyl-L-methionine = (sulfur carrier)-H + biotin + 2 5'-deoxyadenosine + 2 L-methionine + 2 oxidized [2Fe-2S]-[ferredoxin]. Its pathway is cofactor biosynthesis; biotin biosynthesis; biotin from 7,8-diaminononanoate: step 2/2. In terms of biological role, catalyzes the conversion of dethiobiotin (DTB) to biotin by the insertion of a sulfur atom into dethiobiotin via a radical-based mechanism. This Pseudomonas aeruginosa (strain UCBPP-PA14) protein is Biotin synthase.